The sequence spans 1807 residues: Vitellogenin-2 (1807 aa).

The first 16 residues, 1–16 (MWFPVTLLFLAGVAVA), serve as a signal peptide directing secretion. The 796-residue stretch at 24 to 819 (WETGNEYQYS…LIPKYVYVGV (796 aa)) folds into the Vitellogenin domain. Cysteines 180 and 224 form a disulfide. A disordered region spans residues 334 to 402 (SDSDNRRVRH…SSSSSSEEEN (69 aa)). Positions 346-397 (VSQNSEQENSSESSKSSSQSSSSSSSASSSSSSSSSSSSSSSSSSSSSSSSS) are enriched in low complexity. Asparagine 354, asparagine 579, asparagine 635, asparagine 1181, asparagine 1304, asparagine 1373, and asparagine 1506 each carry an N-linked (GlcNAc...) asparagine glycan. One can recognise a VWFD domain in the interval 1448-1636 (QSCTLDKDKV…TYAMTQENCQ (189 aa)). 2 disulfides stabilise this stretch: cysteine 1450–cysteine 1599 and cysteine 1472–cysteine 1635. 2 disordered regions span residues 1635-1655 (CQGP…HEFP) and 1684-1723 (NRNK…KKHN). N-linked (GlcNAc...) asparagine glycosylation occurs at asparagine 1693. Residues 1700-1714 (KKQYQANSQESGSSE) show a composition bias toward polar residues.

It is found in the secreted. Precursor of the egg-yolk proteins that are sources of nutrients during embryonic development. The protein is Vitellogenin-2 of Solenopsis invicta (Red imported fire ant).